The sequence spans 1081 residues: Importin-4 (1081 aa).

Met-1 carries the N-acetylmethionine modification. In terms of domain architecture, Importin N-terminal spans 24-90 (ATEQLQIVLR…KSLILTALQR (67 aa)). HEAT repeat units follow at residues 348-385 (KLCPQLMPMLEEALRSESPYQRKAGLLVLAVLSDGAGD), 390-427 (RLLPPLLQIVCKGLEDPSQVVRNAALFALGQFSENLQP), 431-471 (SYSR…NLGP), 475-513 (PYLPELMECMLQLLRNPSSPRAKELAVSALGAIATAAQA), 895-932 (QFVSRLLPVLLSTAQEADPEVRSNAIFGMGVLAEHGGH), and 936-974 (EHFPKLLGLLFPLLARERHDRVRDNICGALARLLMASPT).

The protein belongs to the importin beta family. Found in a cytosolic complex with ASF1 (ASF1A or ASF1B) and histones H3 and H4.

It localises to the cytoplasm. The protein localises to the nucleus. In terms of biological role, nuclear transport receptor that mediates nuclear import of proteins, such as histones, RPS3A, TNP2 and VDR. Serves as receptor for nuclear localization signals (NLS) in cargo substrates. Is thought to mediate docking of the importin/substrate complex to the nuclear pore complex (NPC) through binding to nucleoporin and the complex is subsequently translocated through the pore by an energy requiring, Ran-dependent mechanism. At the nucleoplasmic side of the NPC, Ran binds to the importin, the importin/substrate complex dissociates and importin is re-exported from the nucleus to the cytoplasm where GTP hydrolysis releases Ran. The directionality of nuclear import is thought to be conferred by an asymmetric distribution of the GTP- and GDP-bound forms of Ran between the cytoplasm and nucleus. Mediates the nuclear import of the histone H3-H4 dimer when in complex with ASF1 (ASF1A or ASF1B). Mediates the ligand-independent nuclear import of vitamin D receptor (VDR). In vitro, mediates the nuclear import of human cytomegalovirus UL84 by recognizing a non-classical NLS. The chain is Importin-4 (IPO4) from Homo sapiens (Human).